A 263-amino-acid polypeptide reads, in one-letter code: Diphthine synthase (263 aa).

S-adenosyl-L-methionine is bound by residues Leu-11, Asp-89, Ala-92, 117–118 (SV), Leu-166, and Leu-208.

Belongs to the diphthine synthase family. As to quaternary structure, homodimer.

It carries out the reaction 2-[(3S)-amino-3-carboxypropyl]-L-histidyl-[translation elongation factor 2] + 3 S-adenosyl-L-methionine = diphthine-[translation elongation factor 2] + 3 S-adenosyl-L-homocysteine + 3 H(+). Its pathway is protein modification; peptidyl-diphthamide biosynthesis. Its function is as follows. S-adenosyl-L-methionine-dependent methyltransferase that catalyzes the trimethylation of the amino group of the modified target histidine residue in translation elongation factor 2 (EF-2), to form an intermediate called diphthine. The three successive methylation reactions represent the second step of diphthamide biosynthesis. This Methanopyrus kandleri (strain AV19 / DSM 6324 / JCM 9639 / NBRC 100938) protein is Diphthine synthase.